The sequence spans 412 residues: Dihydrolipoyllysine-residue acetyltransferase component of pyruvate dehydrogenase complex (412 aa).

The Lipoyl-binding domain occupies 2–78 (PIKILMPVLS…PVNSLIAVLS (77 aa)). Lys43 is subject to N6-lipoyllysine. A Peripheral subunit-binding (PSBD) domain is found at 132–169 (FASPLAKRLAKMGNIRLESVKGSGPHGRIVKQDILSYT). His385 is an active-site residue.

It belongs to the 2-oxoacid dehydrogenase family. As to quaternary structure, forms a 24-polypeptide structural core with octahedral symmetry. (R)-lipoate serves as cofactor.

The enzyme catalyses N(6)-[(R)-dihydrolipoyl]-L-lysyl-[protein] + acetyl-CoA = N(6)-[(R)-S(8)-acetyldihydrolipoyl]-L-lysyl-[protein] + CoA. The pyruvate dehydrogenase complex catalyzes the overall conversion of pyruvate to acetyl-CoA and CO(2). It contains multiple copies of three enzymatic components: pyruvate dehydrogenase (E1), dihydrolipoamide acetyltransferase (E2) and lipoamide dehydrogenase (E3). The protein is Dihydrolipoyllysine-residue acetyltransferase component of pyruvate dehydrogenase complex (pdhC) of Rickettsia felis (strain ATCC VR-1525 / URRWXCal2) (Rickettsia azadi).